A 295-amino-acid polypeptide reads, in one-letter code: MSSSRPVFRSRWLPYLLVAPQLIITVIFFIWPAGEALWYSLQSVDPFGFSSQFVGLDNFVTLFHDSYYLDAFWTTIKFSTFVTVSGLLVSLFFAALVEYIVRGSRFYQTLMLLPYAVAPAVAAVLWIFLFNPGRGLITHFLAEFGYDWNHAQNSGQAMFLVVFASVWKQISYNFLFFYAALQSIPRSLIEAAAIDGAGPIRRFFKIALPLIAPVSFFLLVVNLVYAFFDTFPVIDAATSGGPVQATTTLIYKIYREGFTGLDLASSAAQSVVLMFLVIVLTVVQFRYVEGKVRYQ.

Residues 1 to 11 (MSSSRPVFRSR) are Cytoplasmic-facing. A helical transmembrane segment spans residues 12-32 (WLPYLLVAPQLIITVIFFIWP). Residues 33 to 80 (AGEALWYSLQSVDPFGFSSQFVGLDNFVTLFHDSYYLDAFWTTIKFST) lie on the Periplasmic side of the membrane. Positions 76–284 (IKFSTFVTVS…FLVIVLTVVQ (209 aa)) constitute an ABC transmembrane type-1 domain. A helical membrane pass occupies residues 81-101 (FVTVSGLLVSLFFAALVEYIV). The Cytoplasmic portion of the chain corresponds to 102 to 109 (RGSRFYQT). Residues 110-130 (LMLLPYAVAPAVAAVLWIFLF) form a helical membrane-spanning segment. The Periplasmic segment spans residues 131–156 (NPGRGLITHFLAEFGYDWNHAQNSGQ). Residues 157-177 (AMFLVVFASVWKQISYNFLFF) traverse the membrane as a helical segment. Residues 178–207 (YAALQSIPRSLIEAAAIDGAGPIRRFFKIA) lie on the Cytoplasmic side of the membrane. A helical transmembrane segment spans residues 208–228 (LPLIAPVSFFLLVVNLVYAFF). At 229-262 (DTFPVIDAATSGGPVQATTTLIYKIYREGFTGLD) the chain is on the periplasmic side. A helical membrane pass occupies residues 263-283 (LASSAAQSVVLMFLVIVLTVV). Residues 284 to 295 (QFRYVEGKVRYQ) lie on the Cytoplasmic side of the membrane.

It belongs to the binding-protein-dependent transport system permease family. UgpAE subfamily. As to quaternary structure, the complex is composed of two ATP-binding proteins (UgpC), two transmembrane proteins (UgpA and UgpE) and a solute-binding protein (UgpB).

The protein localises to the cell inner membrane. Its function is as follows. Part of the ABC transporter complex UgpBAEC involved in sn-glycerol-3-phosphate (G3P) import. Probably responsible for the translocation of the substrate across the membrane. This is sn-glycerol-3-phosphate transport system permease protein UgpA (ugpA) from Escherichia coli O6:K15:H31 (strain 536 / UPEC).